The primary structure comprises 408 residues: MSWDQVWIDVNLATMDPSVSAPYGAITNAAIAVKDGKIAWLGPRSELPAFDVLSIPVYRGKGGWITPGLIDAHTHLIFAGNRANEFELRLQGASYEDIARADGGIISTVKACREADEAELFELGRQRLNALAKEGVTTVEIKSGYGLDTETELKILRVARELGKHHHVDVKTTFLGAHAIPPEYKDNSDGYVDLIINKMLPAVIAENLADAVDVFCENIAFNLEQTERVLSAAKAAGLEIKLHAEQLTNMGGSALAARLGAKSVDHIEYLDEAGVKALSESGTCAVLLPGAFYFLRETQKPPIDLLRQYGVPMVLASDFNPGSSPICSTLLMLNMGCTLFRLTPEEALTGLTLNAAKALGIEDNVGSLVVGKQADFCLWDIATPAQLAYSYGVNPCKDVVKNGKLVHQ.

Residues H73 and H75 each contribute to the Fe(3+) site. Zn(2+)-binding residues include H73 and H75. 4-imidazolone-5-propanoate contacts are provided by R82, Y145, and H178. Y145 provides a ligand contact to N-formimidoyl-L-glutamate. H243 is a Fe(3+) binding site. H243 provides a ligand contact to Zn(2+). Residue Q246 participates in 4-imidazolone-5-propanoate binding. Position 318 (D318) interacts with Fe(3+). Zn(2+) is bound at residue D318. Residues N320 and G322 each contribute to the N-formimidoyl-L-glutamate site. S323 serves as a coordination point for 4-imidazolone-5-propanoate.

Belongs to the metallo-dependent hydrolases superfamily. HutI family. Zn(2+) is required as a cofactor. It depends on Fe(3+) as a cofactor.

It localises to the cytoplasm. It catalyses the reaction 4-imidazolone-5-propanoate + H2O = N-formimidoyl-L-glutamate. The protein operates within amino-acid degradation; L-histidine degradation into L-glutamate; N-formimidoyl-L-glutamate from L-histidine: step 3/3. Its function is as follows. Catalyzes the hydrolytic cleavage of the carbon-nitrogen bond in imidazolone-5-propanoate to yield N-formimidoyl-L-glutamate. It is the third step in the universal histidine degradation pathway. In Shewanella sp. (strain W3-18-1), this protein is Imidazolonepropionase.